Reading from the N-terminus, the 99-residue chain is Large ribosomal subunit protein bL28 (99 aa).

Belongs to the bacterial ribosomal protein bL28 family.

The sequence is that of Large ribosomal subunit protein bL28 from Rhizobium etli (strain CIAT 652).